Here is a 272-residue protein sequence, read N- to C-terminus: Tryptophan synthase alpha chain (272 aa).

Residues Glu49 and Asp60 each act as proton acceptor in the active site.

This sequence belongs to the TrpA family. In terms of assembly, tetramer of two alpha and two beta chains.

The enzyme catalyses (1S,2R)-1-C-(indol-3-yl)glycerol 3-phosphate + L-serine = D-glyceraldehyde 3-phosphate + L-tryptophan + H2O. The protein operates within amino-acid biosynthesis; L-tryptophan biosynthesis; L-tryptophan from chorismate: step 5/5. Functionally, the alpha subunit is responsible for the aldol cleavage of indoleglycerol phosphate to indole and glyceraldehyde 3-phosphate. This chain is Tryptophan synthase alpha chain, found in Psychrobacter cryohalolentis (strain ATCC BAA-1226 / DSM 17306 / VKM B-2378 / K5).